The sequence spans 155 residues: Ribosomal RNA large subunit methyltransferase H (155 aa).

S-adenosyl-L-methionine contacts are provided by residues Leu-72, Gly-103, and 122 to 127; that span reads LSALTL.

Belongs to the RNA methyltransferase RlmH family. In terms of assembly, homodimer.

Its subcellular location is the cytoplasm. It catalyses the reaction pseudouridine(1915) in 23S rRNA + S-adenosyl-L-methionine = N(3)-methylpseudouridine(1915) in 23S rRNA + S-adenosyl-L-homocysteine + H(+). In terms of biological role, specifically methylates the pseudouridine at position 1915 (m3Psi1915) in 23S rRNA. This is Ribosomal RNA large subunit methyltransferase H from Citrobacter koseri (strain ATCC BAA-895 / CDC 4225-83 / SGSC4696).